Here is a 568-residue protein sequence, read N- to C-terminus: Peptidoglycan D,D-transpeptidase FtsI (568 aa).

Residues F19–F39 traverse the membrane as a helical segment. S302 (acyl-ester intermediate) is an active-site residue.

This sequence belongs to the transpeptidase family. FtsI subfamily.

Its subcellular location is the cell inner membrane. It catalyses the reaction Preferential cleavage: (Ac)2-L-Lys-D-Ala-|-D-Ala. Also transpeptidation of peptidyl-alanyl moieties that are N-acyl substituents of D-alanine.. It functions in the pathway cell wall biogenesis; peptidoglycan biosynthesis. Its function is as follows. Catalyzes cross-linking of the peptidoglycan cell wall at the division septum. This is Peptidoglycan D,D-transpeptidase FtsI from Buchnera aphidicola subsp. Schizaphis graminum (strain Sg).